The chain runs to 570 residues: Proline--tRNA ligase (570 aa).

It belongs to the class-II aminoacyl-tRNA synthetase family. ProS type 1 subfamily. Homodimer.

It is found in the cytoplasm. It catalyses the reaction tRNA(Pro) + L-proline + ATP = L-prolyl-tRNA(Pro) + AMP + diphosphate. Its function is as follows. Catalyzes the attachment of proline to tRNA(Pro) in a two-step reaction: proline is first activated by ATP to form Pro-AMP and then transferred to the acceptor end of tRNA(Pro). As ProRS can inadvertently accommodate and process non-cognate amino acids such as alanine and cysteine, to avoid such errors it has two additional distinct editing activities against alanine. One activity is designated as 'pretransfer' editing and involves the tRNA(Pro)-independent hydrolysis of activated Ala-AMP. The other activity is designated 'posttransfer' editing and involves deacylation of mischarged Ala-tRNA(Pro). The misacylated Cys-tRNA(Pro) is not edited by ProRS. The chain is Proline--tRNA ligase from Thermoanaerobacter sp. (strain X514).